Reading from the N-terminus, the 954-residue chain is Lysine-specific demethylase JMJ14 (954 aa).

Positions 1–46 (MDQLASLAESVAMEEDSEKQSIKGESSLEPDSTPSSPKITARWNPS) are disordered. Positions 29–38 (EPDSTPSSPK) are enriched in polar residues. One can recognise a JmjN domain in the interval 56-97 (APIFYPTNEDFDDPLGYIEKLRSKAESYGICRIVPPVAWRPP). A Nuclear localization signal 1 motif is present at residues 136–143 (RKRRRISK). A disordered region spans residues 148 to 170 (RRKRDSGCDTASSGSSDSEGKFG). A JmjC domain is found at 263–429 (QYSQCGWNLN…HGQNAVEGYS (167 aa)). Positions 309, 311, and 397 each coordinate Fe cation. A Nuclear localization signal 2 motif is present at residues 470–477 (WKRVCSED). Zn(2+) contacts are provided by Cys519, Cys522, Cys533, Cys535, Cys542, His545, Cys550, and Cys552. Residues 519-571 (CFLCFYDLHMSASSCKCSPNRFACLIHAKDLCSCESKDRYILIRHTLDELWAL) form a C5HC2 zinc finger. A disordered region spans residues 641-670 (SNKEVQLKQDGDSDVNRHGHESERNHVHGI). Positions 645–670 (VQLKQDGDSDVNRHGHESERNHVHGI) are enriched in basic and acidic residues. The region spanning 726-784 (ATNRLSLSVELLSSGSLVVKKLWCSKQAIYPKGFKSRVKFLSVLDPTNLTNYISEVLDA) is the FYR N-terminal domain. Residues 786-876 (LLGPLFRVSV…HQLEEYWNQK (91 aa)) enclose the FYR C-terminal domain. The tract at residues 884-905 (EPIKEGEKDDTEKGGASDPSLD) is disordered. Positions 885-905 (PIKEGEKDDTEKGGASDPSLD) are enriched in basic and acidic residues.

The protein belongs to the JARID1 histone demethylase family. Interacts with NAC050 and NAC051/NAC052. Interacts with THAL in the nucleus. It depends on Fe(2+) as a cofactor. Expressed in shoot apex, primary root tip, trichomes of young leaves, leaf vascular tissues, anther filaments and styles. Detected in inflorescences, leaves, stems, roots and siliques. Mostly expressed in floral organs, and, at low levels, in other organs.

It localises to the nucleus. The protein localises to the nucleoplasm. The enzyme catalyses N(6),N(6),N(6)-trimethyl-L-lysyl(4)-[histone H3] + 2-oxoglutarate + O2 = N(6),N(6)-dimethyl-L-lysyl(4)-[histone H3] + formaldehyde + succinate + CO2. The catalysed reaction is N(6),N(6)-dimethyl-L-lysyl(4)-[histone H3] + 2-oxoglutarate + O2 = N(6)-methyl-L-lysyl(4)-[histone H3] + formaldehyde + succinate + CO2. It carries out the reaction N(6)-methyl-L-lysyl(4)-[histone H3] + 2-oxoglutarate + O2 = L-lysyl(4)-[histone H3] + formaldehyde + succinate + CO2. It catalyses the reaction N(6),N(6),N(6)-trimethyl-L-lysyl(4)-[histone H3] + 3 2-oxoglutarate + 3 O2 = L-lysyl(4)-[histone H3] + 3 formaldehyde + 3 succinate + 3 CO2. Its function is as follows. Transcriptional repressor. Histone demethylase that demethylates 'Lys-4' (H3K4me) of histone H3 with a higher activity for H3K4me3 and H3K4me2 than H3K4me1. No activity on H3K9me3/2, H3K36me3/2 and H3K27me3/2. Function as a nocturne 'eraser' to counteract the diurnal 'writer' methylase activity of ATXR3/SDG2 thus orchestrating the circadian rhythm of histone modifications (e.g. H3K4me3) and modulating the rhythmic expression of diurnal target genes; this mechanism also relies on the circadian clock oscillators CCA1 and LHY. Involved in a negative regulation of root meristem growth upon suboptimal root growth conditions. Represses FT and TSF expression to inhibit the floral transition. Binds around the transcription start site of the FT locus. Involved in the DRM2-mediated maintenance of DNA methylation, but not required for the de novo DNA methylation. Required for demethylating histone H3K4me3 at the target of RNA silencing. Counteracts the DNA methylation of expressed transgenes; specific attenuation of transgene DNA methylation enhances the production of aberrant RNAs (e.g. uncapped and antisense) that readily induce systemic RDR6-dependent post-transcriptional transgene silencing (PTGS) spreading. Together with NAC051/NAC052 and NAC050, regulates gene expression and flowering time, probably by the promotion of RNA-mediated gene silencing. Together with JMJ16 and JMJ17, required for plant growth and development. Promotes local and systemic immunity (especially toward the bacterial pathogen Pseudomonas syringae Pst DC3000 avrRpt2) by regulating positively pathogen-induced H3K4me3 enrichment and expression of defense genes involved in salicylic acid (SA)- and pipecolic acid (Pip)-mediated defense pathways (e.g. PR1, FMO1, ALD1 and SARD4). The sequence is that of Lysine-specific demethylase JMJ14 from Arabidopsis thaliana (Mouse-ear cress).